We begin with the raw amino-acid sequence, 955 residues long: Eukaryotic translation initiation factor 3 subunit A (955 aa).

Residues 96–127 are a coiled coil; sequence LSLAEQRVTDAQAQADKIADEEEADDLEAEET. The region spanning 325–498 is the PCI domain; it reads YQRVASFVLL…RSVLFEEVRA (174 aa). Coiled coils occupy residues 533–636 and 752–860; these read AEAR…INAK and KREA…KRAG. A compositionally biased stretch (basic and acidic residues) spans 789-858; it reads RAEEEAKAAA…ELEAKLEAKR (70 aa). Residues 789 to 955 are disordered; sequence RAEEEAKAAA…GRYIPPSQRN (167 aa).

Belongs to the eIF-3 subunit A family. As to quaternary structure, component of the eukaryotic translation initiation factor 3 (eIF-3) complex.

It localises to the cytoplasm. Functionally, RNA-binding component of the eukaryotic translation initiation factor 3 (eIF-3) complex, which is involved in protein synthesis of a specialized repertoire of mRNAs and, together with other initiation factors, stimulates binding of mRNA and methionyl-tRNAi to the 40S ribosome. The eIF-3 complex specifically targets and initiates translation of a subset of mRNAs involved in cell proliferation. The chain is Eukaryotic translation initiation factor 3 subunit A from Yarrowia lipolytica (strain CLIB 122 / E 150) (Yeast).